Consider the following 387-residue polypeptide: tRNA-specific 2-thiouridylase MnmA (387 aa).

ATP contacts are provided by residues 6–13 and L32; that span reads AMSGGVDS. The Nucleophile role is filled by C101. Cysteines 101 and 199 form a disulfide. G125 contacts ATP. The tract at residues 148 to 150 is interaction with tRNA; sequence KDQ. C199 functions as the Cysteine persulfide intermediate in the catalytic mechanism.

The protein belongs to the MnmA/TRMU family.

Its subcellular location is the cytoplasm. It carries out the reaction S-sulfanyl-L-cysteinyl-[protein] + uridine(34) in tRNA + AH2 + ATP = 2-thiouridine(34) in tRNA + L-cysteinyl-[protein] + A + AMP + diphosphate + H(+). Its function is as follows. Catalyzes the 2-thiolation of uridine at the wobble position (U34) of tRNA, leading to the formation of s(2)U34. This chain is tRNA-specific 2-thiouridylase MnmA, found in Clavibacter michiganensis subsp. michiganensis (strain NCPPB 382).